Here is a 96-residue protein sequence, read N- to C-terminus: (4S)-4-hydroxy-5-phosphonooxypentane-2,3-dione isomerase (96 aa).

The ABM domain occupies histidine 2–phenylalanine 91.

The protein belongs to the LsrG family. As to quaternary structure, homodimer.

The protein localises to the cytoplasm. It carries out the reaction (2S)-2-hydroxy-3,4-dioxopentyl phosphate = 3-hydroxy-2,4-dioxopentyl phosphate. Involved in the degradation of phospho-AI-2, thereby terminating induction of the lsr operon and closing the AI-2 signaling cycle. Catalyzes the conversion of (4S)-4-hydroxy-5-phosphonooxypentane-2,3-dione (P-DPD) to 3-hydroxy-5-phosphonooxypentane-2,4-dione (P-HPD). The polypeptide is (4S)-4-hydroxy-5-phosphonooxypentane-2,3-dione isomerase (Escherichia coli O157:H7).